The following is a 362-amino-acid chain: MEGKFAISESTNLLQRIKDFTQSVVVDLAEGRSPKISINQFRNYCMNPEADCLCSSDKPKGQEIFTLKKEPQTYRIDMLLRVLLIVQQLLQENRHASKRDIYYMHPSAFKAQSIVDRAIGDICILFQCSRYNLNVVSVGNGLVMGWLKFREAGRKFDCLNSLNTAYPVPVLVEEVEDIVSLAEYILVVEKETVFQRLANDMFCKTNRCIVITGRGYPDVSTRRFLRLLMEKLHLPVHCLVDCDPYGFEILATYRFGSMQMAYDIESLRAPDMKWLGAFPSDSEVYSVPKQCLLPLTEEDKKRTEAMLLRCYLKREMPQWRLELETMLKRGVKFEIEALSVHSLSFLSEVYIPSKIRREVSSP.

Positions 8-142 (SESTNLLQRI…LNVVSVGNGL (135 aa)) constitute a Topo IIA-type catalytic domain. Tyr-103 functions as the O-(5'-phospho-DNA)-tyrosine intermediate in the catalytic mechanism. 2 residues coordinate Mg(2+): Glu-189 and Asp-241.

Belongs to the TOP6A family. Heterotetramer of 2 SPO11 (SPO11-1 and/or SPO11-2) and 2 MTOPVIB chains. Interacts with MTOPVIB. May form a heterodimer with SPO11-2. Interacts with PRD1. Does not interact with TOP6B. It depends on Mg(2+) as a cofactor. In terms of tissue distribution, expressed in shoots, young seedlings, flowers and reproductive tissues. Not found in roots or rosette leaves.

It is found in the nucleus. It carries out the reaction ATP-dependent breakage, passage and rejoining of double-stranded DNA.. In terms of biological role, component of a topoisomerase 6 complex specifically required for meiotic recombination. Together with MTOPVIB, mediates DNA cleavage that forms the double-strand breaks (DSB) that initiate meiotic recombination. The complex promotes relaxation of negative and positive supercoiled DNA and DNA decatenation through cleavage and ligation cycles. This chain is Meiotic recombination protein SPO11-1, found in Arabidopsis thaliana (Mouse-ear cress).